The following is a 135-amino-acid chain: Large ribosomal subunit protein uL16c (135 aa).

It belongs to the universal ribosomal protein uL16 family. In terms of assembly, part of the 50S ribosomal subunit.

It localises to the plastid. The protein localises to the chloroplast. The polypeptide is Large ribosomal subunit protein uL16c (Morus indica (Mulberry)).